We begin with the raw amino-acid sequence, 556 residues long: Arginine--tRNA ligase (556 aa).

Residues 129–139 (ANPTGPLHVGH) carry the 'HIGH' region motif.

It belongs to the class-I aminoacyl-tRNA synthetase family. As to quaternary structure, monomer.

It is found in the cytoplasm. The catalysed reaction is tRNA(Arg) + L-arginine + ATP = L-arginyl-tRNA(Arg) + AMP + diphosphate. The protein is Arginine--tRNA ligase of Desulfosudis oleivorans (strain DSM 6200 / JCM 39069 / Hxd3) (Desulfococcus oleovorans).